Here is a 162-residue protein sequence, read N- to C-terminus: Transcriptional repressor NrdR (162 aa).

A zinc finger lies at 3–34; that stretch reads CPFCQFEGLKVTDSRDAMEMNAIRRRRECLNC. Residues 48 to 138 form the ATP-cone domain; the sequence is VQVQKRDGTY…VYKRFKDLGE (91 aa).

It belongs to the NrdR family. Requires Zn(2+) as cofactor.

Functionally, negatively regulates transcription of bacterial ribonucleotide reductase nrd genes and operons by binding to NrdR-boxes. In Protochlamydia amoebophila (strain UWE25), this protein is Transcriptional repressor NrdR.